The chain runs to 152 residues: Nucleoside diphosphate kinase A 1 (152 aa).

Lysine 12, phenylalanine 60, arginine 88, threonine 94, arginine 105, and asparagine 115 together coordinate ATP. Histidine 118 acts as the Pros-phosphohistidine intermediate in catalysis.

It belongs to the NDK family. As to quaternary structure, homohexamer. Requires Mg(2+) as cofactor. Post-translationally, the N-terminus is blocked.

The protein localises to the cytoplasm. The protein resides in the cell membrane. It is found in the nucleus. The enzyme catalyses a 2'-deoxyribonucleoside 5'-diphosphate + ATP = a 2'-deoxyribonucleoside 5'-triphosphate + ADP. It carries out the reaction a ribonucleoside 5'-diphosphate + ATP = a ribonucleoside 5'-triphosphate + ADP. Autophosphorylation at His-118 increases serine/threonine protein kinase activity of the enzyme. Interaction with the SET complex inhibits exonuclease activity. Its function is as follows. Major role in the synthesis of nucleoside triphosphates other than ATP. Possesses nucleoside-diphosphate kinase, serine/threonine-specific protein kinase, geranyl and farnesyl pyrophosphate kinase, histidine protein kinase and 3'-5' exonuclease activities. Involved in cell proliferation, differentiation and development, signal transduction, G protein-coupled receptor endocytosis, and gene expression. Required for neural development including neural patterning and cell fate determination. The chain is Nucleoside diphosphate kinase A 1 (NME1-1) from Bos taurus (Bovine).